Here is a 302-residue protein sequence, read N- to C-terminus: Bifunctional protein FolD (302 aa).

Residues 165 to 167 (GRS), S190, and I231 contribute to the NADP(+) site.

Belongs to the tetrahydrofolate dehydrogenase/cyclohydrolase family. As to quaternary structure, homodimer.

The enzyme catalyses (6R)-5,10-methylene-5,6,7,8-tetrahydrofolate + NADP(+) = (6R)-5,10-methenyltetrahydrofolate + NADPH. It catalyses the reaction (6R)-5,10-methenyltetrahydrofolate + H2O = (6R)-10-formyltetrahydrofolate + H(+). Its pathway is one-carbon metabolism; tetrahydrofolate interconversion. Its function is as follows. Catalyzes the oxidation of 5,10-methylenetetrahydrofolate to 5,10-methenyltetrahydrofolate and then the hydrolysis of 5,10-methenyltetrahydrofolate to 10-formyltetrahydrofolate. This chain is Bifunctional protein FolD, found in Prochlorococcus marinus (strain MIT 9313).